Reading from the N-terminus, the 983-residue chain is GPI ethanolamine phosphate transferase 2, catalytic subunit (983 aa).

Residues 1–431 are Lumenal-facing; that stretch reads MRLGSGTFAT…SLSAQVAQYD (431 aa). Asn-194 is a glycosylation site (N-linked (GlcNAc...) asparagine). A run of 12 helical transmembrane segments spans residues 432-452, 471-491, 506-526, 552-572, 699-719, 721-741, 752-772, 789-809, 812-832, 879-899, 919-939, and 955-975; these read IYSM…LLLS, GFSL…VIVC, LAAG…VSVL, LLIL…SFVE, VLAA…CSPV, KAAL…IGSV, ISKG…ILFT, LKTV…ALLF, HNLP…KFIW, VEIP…VLWA, ACFC…VLVT, and LLYE…FTAM.

This sequence belongs to the PIGG/PIGN/PIGO family. PIGG subfamily. In terms of assembly, part of the ethanolamine phosphate transferase 2 complex composed by PIGG and PIGF. PIGF is required to stabilize it. Competes with PIGO for the binding of PIGF.

The protein resides in the endoplasmic reticulum membrane. It functions in the pathway glycolipid biosynthesis; glycosylphosphatidylinositol-anchor biosynthesis. In terms of biological role, catalytic subunit of the ethanolamine phosphate transferase 2 complex that transfers an ethanolamine phosphate (EtNP) from a phosphatidylethanolamine (PE) to the 6-OH position of the second alpha-1,6-linked mannose of a 6-PEtn-alpha-D-Man-(1-&gt;2)-alpha-D-Man-(1-&gt;6)-2-PEtn-alpha-D-Man-(1-&gt;4)-alpha-D-GlcN-(1-&gt;6)-(1-radyl,2-acyl-sn-glycero-3-phospho)-2-acyl-inositol (also termed H7) intermediate to generate a 6-PEtn-alpha-D-Man-(1-&gt;2)-6-PEtn-alpha-D-Man-(1-&gt;6)-2-PEtn-alpha-D-Man-(1-&gt;4)-alpha-D-GlcN-(1-&gt;6)-(1-radyl,2-acyl-sn-glycero-3-phospho)-2-acyl-inositol (also termed H8) and participates in the eleventh step of the glycosylphosphatidylinositol-anchor biosynthesis. In Homo sapiens (Human), this protein is GPI ethanolamine phosphate transferase 2, catalytic subunit.